Consider the following 93-residue polypeptide: Bublin coiled-coil protein (93 aa).

2 disordered regions span residues 1 to 26 and 74 to 93; these read MAGP…GDTF and QQQS…QPPA. The span at 17–26 shows a compositional bias: acidic residues; sequence DEGDEGGDTF. Residues 59-80 adopt a coiled-coil conformation; it reads LKELLESNRQTRLEFQQQSKQL.

The protein belongs to the UPF0184 (EST00098) family.

It localises to the cell junction. Its subcellular location is the cytoplasm. The protein localises to the cytoskeleton. Its function is as follows. Essential for intermediate filament organization in intestinal cells, interacts with intermediate filament and regulates intestinal lumen morphology. The polypeptide is Bublin coiled-coil protein (BBLN) (Taeniopygia guttata (Zebra finch)).